The sequence spans 122 residues: MIQTQTVLDVADNSGARRVMCIKVLGGSHRRYASIGDVIKVSVKEAIPRGKVKKGQVLKAVVVRTRKGVRRQDGSLIRFDGNAAVLLNNQEQPIGTRIFGPVTRELRGEKFMKIISLAPEVL.

Belongs to the universal ribosomal protein uL14 family. Part of the 50S ribosomal subunit. Forms a cluster with proteins L3 and L19. In the 70S ribosome, L14 and L19 interact and together make contacts with the 16S rRNA in bridges B5 and B8.

In terms of biological role, binds to 23S rRNA. Forms part of two intersubunit bridges in the 70S ribosome. The polypeptide is Large ribosomal subunit protein uL14 (Hahella chejuensis (strain KCTC 2396)).